The chain runs to 445 residues: 2-oxoisovalerate dehydrogenase subunit alpha, mitochondrial (445 aa).

The N-terminal 45 residues, 1 to 45, are a transit peptide targeting the mitochondrion; that stretch reads MAVAIAAARVWRLNRGLSQAALLLLRRPGARGLARSHPRRQQQQF. The tract at residues 33–54 is disordered; it reads LARSHPRRQQQQFSSLDDKPQF. Thiamine diphosphate-binding residues include Tyr158 and Arg159. Ser206 serves as a coordination point for K(+). Position 207 (Ser207) interacts with thiamine diphosphate. Pro208, Thr211, and Gln212 together coordinate K(+). Residue Glu238 participates in Mg(2+) binding. Thiamine diphosphate is bound by residues Gly239, Ala240, and Arg265. Residues Asn267 and Tyr269 each contribute to the Mg(2+) site. His336 serves as a coordination point for thiamine diphosphate. Ser337 carries the post-translational modification Phosphoserine; by BCKDK. A Phosphothreonine modification is found at Thr338. Residues Ser339 and Ser347 each carry the phosphoserine modification. Lys356 bears the N6-acetyllysine; alternate mark. Residue Lys356 is modified to N6-succinyllysine; alternate. Lys380 is modified (N6-succinyllysine).

The protein belongs to the BCKDHA family. In terms of assembly, heterotetramer of 2 alpha/BCKDHA and 2 beta chains/BCKDHB that forms the branched-chain alpha-keto acid decarboxylase (E1) component of the BCKD complex. The branched-chain alpha-ketoacid dehydrogenase is a large complex composed of three major building blocks E1, E2 and E3. It is organized around E2, a 24-meric cubic core composed of DBT, to which are associated 6 to 12 copies of E1, and approximately 6 copies of the dehydrogenase E3, a DLD dimer. Interacts with PPM1K. The cofactor is thiamine diphosphate. Mg(2+) serves as cofactor. In terms of processing, phosphorylated at Ser-337 by BCKDK and dephosphorylated by protein phosphatase PPM1K.

Its subcellular location is the mitochondrion matrix. It carries out the reaction N(6)-[(R)-lipoyl]-L-lysyl-[protein] + 3-methyl-2-oxobutanoate + H(+) = N(6)-[(R)-S(8)-2-methylpropanoyldihydrolipoyl]-L-lysyl-[protein] + CO2. Its function is as follows. Together with BCKDHB forms the heterotetrameric E1 subunit of the mitochondrial branched-chain alpha-ketoacid dehydrogenase (BCKD) complex. The BCKD complex catalyzes the multi-step oxidative decarboxylation of alpha-ketoacids derived from the branched-chain amino-acids valine, leucine and isoleucine producing CO2 and acyl-CoA which is subsequently utilized to produce energy. The E1 subunit catalyzes the first step with the decarboxylation of the alpha-ketoacid forming an enzyme-product intermediate. A reductive acylation mediated by the lipoylamide cofactor of E2 extracts the acyl group from the E1 active site for the next step of the reaction. The chain is 2-oxoisovalerate dehydrogenase subunit alpha, mitochondrial (BCKDHA) from Pan troglodytes (Chimpanzee).